Here is a 1035-residue protein sequence, read N- to C-terminus: Condensin complex subunit 3 (1035 aa).

HEAT repeat units follow at residues 113-150 (RFVD…NIGE) and 153-191 (ESLF…EEQT). Serine 198 is modified (phosphoserine). The stretch at 201 to 239 (EENFEATRTLVASIQNDPSAEVRRAAMLNLINDNNTRPY) is one HEAT 3 repeat. Positions 500-536 (EEKIKSKKINRRNETSVDEEDENGTHNDEVNEDEEDD) are disordered. HEAT repeat units follow at residues 597 to 635 (ILIA…LDVK) and 827 to 864 (VQLT…SSEQ). Basic and acidic residues predominate over residues 909–919 (ERSETQTKDEN). Disordered stretches follow at residues 909 to 934 (ERSE…GNSF) and 959 to 995 (TTVN…LENM). Composition is skewed to polar residues over residues 920–934 (NTAN…GNSF) and 959–973 (TTVN…TEQS). Serine 933 carries the post-translational modification Phosphoserine. Residue serine 981 is modified to Phosphoserine. Positions 986–995 (IDTSKNLENM) are enriched in polar residues. Serine 1008 carries the phosphoserine modification. Residues 1012–1035 (PDEKSDAMSIDEEDKDSESFSEVC) form a disordered region.

This sequence belongs to the CND3 (condensin subunit 3) family. As to quaternary structure, component of the condensin complex, which contains the SMC2 and SMC4 heterodimer, and three non SMC subunits that probably regulate the complex: BRN1, YCS4 and YCG1/YCS5.

Its subcellular location is the nucleus. It localises to the cytoplasm. The protein localises to the chromosome. Its function is as follows. Regulatory subunit of the condensin complex, a complex required for conversion of interphase chromatin into mitotic-like condense chromosomes. The condensin complex probably introduces positive supercoils into relaxed DNA in the presence of type I topoisomerases and converts nicked DNA into positive knotted forms in the presence of type II topoisomerases. The condensin complex probably also plays a role during interphase. The chain is Condensin complex subunit 3 (YCG1) from Saccharomyces cerevisiae (strain ATCC 204508 / S288c) (Baker's yeast).